The following is a 266-amino-acid chain: Derlin-1 (266 aa).

Over 1-20 (MSSPGEFYNSLPPITKAYGT) the chain is Cytoplasmic. The chain crosses the membrane as a helical span at residues 21–41 (LCFFTTVATQLGLVAPVHIAL). Residues 42 to 55 (IPELVLKQFQIWRL) lie on the Lumenal side of the membrane. Residues 56–76 (ITNLFFLGGFSINFGIRLLMI) form a helical membrane-spanning segment. Topologically, residues 77–94 (ARYGVQLEKGPFERRTAD) are cytoplasmic. The helical transmembrane segment at 95-115 (FLWMMIFGSFTLLVLSVIPFF) threads the bilayer. At 116 to 156 (WTPFLGVSLVFMLLYLWSREFPNANISLYGLVTLKAFYLPW) the chain is on the lumenal side. A helical membrane pass occupies residues 157–177 (AMLALDVIFGSPIMPDLLGII). Over 178–266 (AGHLYYFLTV…FRGRSYRLTD (89 aa)) the chain is Cytoplasmic. Positions 235 to 266 (GGVGGGGAYSSARAPPESSNTAFRGRSYRLTD) are disordered.

The protein belongs to the derlin family.

It is found in the endoplasmic reticulum membrane. Functionally, may be involved in the degradation process of specific misfolded endoplasmic reticulum (ER) luminal proteins. The polypeptide is Derlin-1 (DER1) (Arabidopsis thaliana (Mouse-ear cress)).